The following is a 466-amino-acid chain: Asparagine--tRNA ligase (466 aa).

Belongs to the class-II aminoacyl-tRNA synthetase family. As to quaternary structure, homodimer.

The protein localises to the cytoplasm. The enzyme catalyses tRNA(Asn) + L-asparagine + ATP = L-asparaginyl-tRNA(Asn) + AMP + diphosphate + H(+). The chain is Asparagine--tRNA ligase from Shewanella frigidimarina (strain NCIMB 400).